Reading from the N-terminus, the 409-residue chain is UV excision repair protein RAD23 homolog B (409 aa).

A Ubiquitin-like domain is found at 1 to 79; it reads MQVTLKTLQQ…VVVMVTKPKA (79 aa). A disordered region spans residues 80–175; that stretch reads VSTPAPATTQ…STSGDSSRSN (96 aa). The span at 81–143 shows a compositional bias: low complexity; that stretch reads STPAPATTQQ…SSEPAPASAA (63 aa). Positions 144-153 are enriched in basic and acidic residues; sequence KQEKPAEKPA. The residue at position 155 (threonine 155) is a Phosphothreonine. Position 160 is a phosphoserine (serine 160). Residues 160–175 show a composition bias toward polar residues; that stretch reads SPTATDSTSGDSSRSN. Phosphothreonine is present on threonine 164. Serine 174 is subject to Phosphoserine. Threonine 186 carries the phosphothreonine modification. In terms of domain architecture, UBA 1 spans 188-228; that stretch reads QSYENMVTEIMSMGYEREQVIAALRASFNNPDRAVEYLLMG. Serine 199 carries the post-translational modification Phosphoserine. At tyrosine 202 the chain carries Phosphotyrosine. Residues 236-276 are disordered; it reads QAVVDPPQAASTGAPQSSAVAAAAATTTATTTTTSSGGHPL. The span at 252–271 shows a compositional bias: low complexity; sequence SSAVAAAAATTTATTTTTSS. The 44-residue stretch at 274 to 317 folds into the STI1 domain; the sequence is HPLEFLRNQPQFQQMRQIIQQNPSLLPALLQQIGRENPQLLQQI. The 41-residue stretch at 364–404 folds into the UBA 2 domain; the sequence is PQEKEAIERLKALGFPEGLVIQAYFACEKNENLAANFLLQQ.

Belongs to the RAD23 family. Component of the XPC complex composed of XPC, RAD23B and CETN2. Interacts with NGLY1 and PSMC1. Interacts with ATXN3. Interacts with PSMD4 and PSMC5. Interacts with AMFR. Interacts with VCP; the interaction is indirect and mediated by NGLY1.

It is found in the nucleus. The protein resides in the cytoplasm. In terms of biological role, multiubiquitin chain receptor involved in modulation of proteasomal degradation. Binds to polyubiquitin chains. Proposed to be capable to bind simultaneously to the 26S proteasome and to polyubiquitinated substrates and to deliver ubiquitinated proteins to the proteasome. May play a role in endoplasmic reticulum-associated degradation (ERAD) of misfolded glycoproteins by association with PNGase and delivering deglycosylated proteins to the proteasome. Its function is as follows. Involved in global genome nucleotide excision repair (GG-NER) by acting as component of the XPC complex. Cooperatively with CETN2 appears to stabilize XPC. May protect XPC from proteasomal degradation. The XPC complex is proposed to represent the first factor bound at the sites of DNA damage and together with other core recognition factors, XPA, RPA and the TFIIH complex, is part of the pre-incision (or initial recognition) complex. The XPC complex recognizes a wide spectrum of damaged DNA characterized by distortions of the DNA helix such as single-stranded loops, mismatched bubbles or single-stranded overhangs. The orientation of XPC complex binding appears to be crucial for inducing a productive NER. XPC complex is proposed to recognize and to interact with unpaired bases on the undamaged DNA strand which is followed by recruitment of the TFIIH complex and subsequent scanning for lesions in the opposite strand in a 5'-to-3' direction by the NER machinery. Cyclobutane pyrimidine dimers (CPDs) which are formed upon UV-induced DNA damage esacpe detection by the XPC complex due to a low degree of structural perurbation. Instead they are detected by the UV-DDB complex which in turn recruits and cooperates with the XPC complex in the respective DNA repair. In vitro, the XPC:RAD23B dimer is sufficient to initiate NER; it preferentially binds to cisplatin and UV-damaged double-stranded DNA and also binds to a variety of chemically and structurally diverse DNA adducts. XPC:RAD23B contacts DNA both 5' and 3' of a cisplatin lesion with a preference for the 5' side. XPC:RAD23B induces a bend in DNA upon binding. XPC:RAD23B stimulates the activity of DNA glycosylases TDG and SMUG1. The polypeptide is UV excision repair protein RAD23 homolog B (RAD23B) (Homo sapiens (Human)).